A 156-amino-acid polypeptide reads, in one-letter code: Small ribosomal subunit protein uS7 (156 aa).

The protein belongs to the universal ribosomal protein uS7 family. Part of the 30S ribosomal subunit. Contacts proteins S9 and S11.

One of the primary rRNA binding proteins, it binds directly to 16S rRNA where it nucleates assembly of the head domain of the 30S subunit. Is located at the subunit interface close to the decoding center, probably blocks exit of the E-site tRNA. This chain is Small ribosomal subunit protein uS7, found in Thermobifida fusca (strain YX).